A 102-amino-acid polypeptide reads, in one-letter code: Large ribosomal subunit protein bL21 (102 aa).

Belongs to the bacterial ribosomal protein bL21 family. Part of the 50S ribosomal subunit. Contacts protein L20.

Its function is as follows. This protein binds to 23S rRNA in the presence of protein L20. The sequence is that of Large ribosomal subunit protein bL21 from Campylobacter jejuni subsp. jejuni serotype O:6 (strain 81116 / NCTC 11828).